Reading from the N-terminus, the 550-residue chain is Chaperonin GroEL (550 aa).

ATP-binding positions include 30–33 (TLGP), Lys51, 87–91 (DGTTT), Gly415, and Asp496. The tract at residues 528-550 (EGGDMPAMPPGGMGGMGGMGGMM) is disordered. The span at 538–550 (GGMGGMGGMGGMM) shows a compositional bias: gly residues.

Belongs to the chaperonin (HSP60) family. Forms a cylinder of 14 subunits composed of two heptameric rings stacked back-to-back. Interacts with the co-chaperonin GroES.

The protein localises to the cytoplasm. It carries out the reaction ATP + H2O + a folded polypeptide = ADP + phosphate + an unfolded polypeptide.. Its function is as follows. Together with its co-chaperonin GroES, plays an essential role in assisting protein folding. The GroEL-GroES system forms a nano-cage that allows encapsulation of the non-native substrate proteins and provides a physical environment optimized to promote and accelerate protein folding. The sequence is that of Chaperonin GroEL from Chlorobium phaeobacteroides (strain BS1).